We begin with the raw amino-acid sequence, 562 residues long: Arginine--tRNA ligase (562 aa).

The 'HIGH' region signature appears at 136 to 146; the sequence is ANPTGPMHMGN.

The protein belongs to the class-I aminoacyl-tRNA synthetase family. As to quaternary structure, monomer.

The protein localises to the cytoplasm. The catalysed reaction is tRNA(Arg) + L-arginine + ATP = L-arginyl-tRNA(Arg) + AMP + diphosphate. The polypeptide is Arginine--tRNA ligase (argS) (Caldanaerobacter subterraneus subsp. tengcongensis (strain DSM 15242 / JCM 11007 / NBRC 100824 / MB4) (Thermoanaerobacter tengcongensis)).